Consider the following 76-residue polypeptide: Conotoxin VnMSGL-0112 (76 aa).

Residues M1–S20 form the signal peptide. A propeptide spanning residues H21–R45 is cleaved from the precursor. 3 cysteine pairs are disulfide-bonded: C49-C61, C53-C70, and C60-C74.

The protein belongs to the conotoxin O3 superfamily. In terms of tissue distribution, expressed by the venom duct.

The protein resides in the secreted. In Conus ventricosus (Mediterranean cone), this protein is Conotoxin VnMSGL-0112.